The sequence spans 430 residues: MMVLRMKVEWYLDFVDLNYEPGRDELIVEYYFEPNGVSPEEAAGRIASESSIGTWTTLWKLPEMAKRSMAKVFYLEKHGEGYIAKIAYPLTLFEEGSLVQLFSAVAGNVFGMKALKNLRLLDFHPPYEYLRHFKGPQFGVQGIREFMGVKDRPLTATVPKPKMGWSVEEYAEIAYELWSGGIDLLKDDENFTSFPFNRFEERVRKLYRVRDRVEAETGETKEYLINITGPVNIMEKRAEMVANEGGQYVMIDIVVAGWSALQYMREVTEDLGLAIHAHRAMHAAFTRNPRHGITMLALAKAARMIGVDQIHTGTAVGKMAGNYEEIKRINDFLLSKWEHIRPVFPVASGGLHPGLMPELIRLFGKDLVIQAGGGVMGHPDGPRAGAKALRDAIDAAIEGVDLDEKAKSSPELKKSLREVGLSKAKVGVQH.

Lys-160 (proton acceptor) is an active-site residue. Lys-162 contributes to the substrate binding site. Mg(2+)-binding residues include Lys-186, Asp-188, and Glu-189. N6-carboxylysine is present on Lys-186. His-278 (proton acceptor) is an active-site residue. Substrate-binding positions include Arg-279, His-311, 348–350 (SGG), and 370–373 (QAGG).

It belongs to the RuBisCO large chain family. Type III subfamily. Homodimer or homodecamer. In contrast to form I RuBisCO, the form III RuBisCO is composed solely of large subunits. Requires Mg(2+) as cofactor.

The enzyme catalyses 2 (2R)-3-phosphoglycerate + 2 H(+) = D-ribulose 1,5-bisphosphate + CO2 + H2O. It carries out the reaction D-ribulose 1,5-bisphosphate + O2 = 2-phosphoglycolate + (2R)-3-phosphoglycerate + 2 H(+). Its function is as follows. Catalyzes the addition of molecular CO(2) and H(2)O to ribulose 1,5-bisphosphate (RuBP), generating two molecules of 3-phosphoglycerate (3-PGA). Functions in an archaeal AMP degradation pathway, together with AMP phosphorylase and R15P isomerase. This chain is Ribulose bisphosphate carboxylase, found in Pyrococcus horikoshii (strain ATCC 700860 / DSM 12428 / JCM 9974 / NBRC 100139 / OT-3).